The sequence spans 340 residues: Serine racemase (340 aa).

E13 contacts Mg(2+). 5 residues coordinate ATP: S31, S32, I33, K51, and T52. The Proton acceptor role is filled by K56. K56 bears the N6-(pyridoxal phosphate)lysine mark. Ca(2+) is bound by residues P69 and T81. S84 serves as the catalytic Proton acceptor. N86 lines the pyridoxal 5'-phosphate pocket. Q89 is a binding site for ATP. An S-nitrosocysteine modification is found at C113. Y121 serves as a coordination point for ATP. N154 lines the pyridoxal 5'-phosphate pocket. D178 provides a ligand contact to Mg(2+). G185, G186, G187, G188, and M189 together coordinate pyridoxal 5'-phosphate. E210, A214, D216, and N247 together coordinate Mg(2+). Ca(2+)-binding residues include E210, A214, D216, and N247. The Mn(2+) site is built by E210, A214, and D216. ATP is bound at residue K279. Residue S313 coordinates pyridoxal 5'-phosphate. N316 serves as a coordination point for ATP.

The protein belongs to the serine/threonine dehydratase family. Homodimer. Requires Mg(2+) as cofactor. It depends on Mn(2+) as a cofactor. The cofactor is Ca(2+). Pyridoxal 5'-phosphate serves as cofactor. Post-translationally, S-nitrosylated, leading to decrease the enzyme activity. In terms of tissue distribution, expressed in the cerebellum, hippocampus, dorsolateral prefrontal cortex, and in motor neurons and glial cells of the lumbar spinal cord (at protein level). Increased in the dorsolateral prefrontal cortex of schizophrenic patients (at protein level). Brain: expressed at high levels in hippocampus and corpus callosum, intermediate levels in substantia nigra and caudate, and low levels in amygdala, thalamus, and subthalamic nuclei. Expressed in heart, skeletal muscle, kidney, and liver.

The enzyme catalyses L-serine = D-serine. It catalyses the reaction D-serine = pyruvate + NH4(+). The catalysed reaction is L-serine = pyruvate + NH4(+). Its activity is regulated as follows. Allosterically activated by magnesium, and possibly also other divalent metal cations. Allosterically activated by ATP, ADP or GTP. Competitively inhibited by malonate. Inhibited by meso-tartrate and malonate. Functionally, catalyzes the synthesis of D-serine from L-serine. D-serine is a key coagonist with glutamate at NMDA receptors. Has dehydratase activity towards both L-serine and D-serine. In Homo sapiens (Human), this protein is Serine racemase (SRR).